The primary structure comprises 705 residues: Ribosomal RNA large subunit methyltransferase K/L (705 aa).

The THUMP domain maps to 43–154 (VVYRCCLWSR…GEKGILGFDL (112 aa)).

It belongs to the methyltransferase superfamily. RlmKL family.

It is found in the cytoplasm. The catalysed reaction is guanosine(2445) in 23S rRNA + S-adenosyl-L-methionine = N(2)-methylguanosine(2445) in 23S rRNA + S-adenosyl-L-homocysteine + H(+). The enzyme catalyses guanosine(2069) in 23S rRNA + S-adenosyl-L-methionine = N(2)-methylguanosine(2069) in 23S rRNA + S-adenosyl-L-homocysteine + H(+). Functionally, specifically methylates the guanine in position 2445 (m2G2445) and the guanine in position 2069 (m7G2069) of 23S rRNA. The chain is Ribosomal RNA large subunit methyltransferase K/L from Aliivibrio fischeri (strain MJ11) (Vibrio fischeri).